The following is a 253-amino-acid chain: Ribonuclease HII (253 aa).

The RNase H type-2 domain maps to 70–253 (DLIAGVDEVG…KTFAPIKDIL (184 aa)). A divalent metal cation-binding residues include aspartate 76, glutamate 77, and aspartate 168.

Belongs to the RNase HII family. It depends on Mn(2+) as a cofactor. Requires Mg(2+) as cofactor.

Its subcellular location is the cytoplasm. The enzyme catalyses Endonucleolytic cleavage to 5'-phosphomonoester.. Functionally, endonuclease that specifically degrades the RNA of RNA-DNA hybrids. The protein is Ribonuclease HII of Leuconostoc mesenteroides subsp. mesenteroides (strain ATCC 8293 / DSM 20343 / BCRC 11652 / CCM 1803 / JCM 6124 / NCDO 523 / NBRC 100496 / NCIMB 8023 / NCTC 12954 / NRRL B-1118 / 37Y).